Reading from the N-terminus, the 468-residue chain is Adenosylhomocysteinase (468 aa).

Substrate is bound by residues Thr57, Asp132, and Glu194. NAD(+) is bound at residue 195–197; sequence TTT. Substrate contacts are provided by Lys224 and Asp228. Residues Asn229, 258–263, Glu281, Asn316, 337–339, and Asn382 each bind NAD(+); these read GFGDVG and IGH.

It belongs to the adenosylhomocysteinase family. The cofactor is NAD(+).

It localises to the cytoplasm. It catalyses the reaction S-adenosyl-L-homocysteine + H2O = L-homocysteine + adenosine. Its pathway is amino-acid biosynthesis; L-homocysteine biosynthesis; L-homocysteine from S-adenosyl-L-homocysteine: step 1/1. May play a key role in the regulation of the intracellular concentration of adenosylhomocysteine. The chain is Adenosylhomocysteinase from Methylobacterium sp. (strain 4-46).